We begin with the raw amino-acid sequence, 512 residues long: Na(+)/H(+) antiporter NhaB (512 aa).

Transmembrane regions (helical) follow at residues 28 to 48 (FLII…WLLV), 52 to 72 (IFTL…LLAI), 97 to 117 (LLLM…LFIF), 144 to 164 (FLDA…FYGI), 201 to 221 (LMMH…VGEP), 237 to 257 (FFLR…LTCF), 296 to 330 (LALI…IILA), 347 to 367 (TEAL…AVII), 390 to 410 (LFYL…VGSV), 446 to 466 (ATPN…APLI), and 474 to 494 (VWMA…CVKF).

This sequence belongs to the NhaB Na(+)/H(+) (TC 2.A.34) antiporter family.

The protein resides in the cell inner membrane. It catalyses the reaction 2 Na(+)(in) + 3 H(+)(out) = 2 Na(+)(out) + 3 H(+)(in). Its function is as follows. Na(+)/H(+) antiporter that extrudes sodium in exchange for external protons. The protein is Na(+)/H(+) antiporter NhaB of Enterobacter sp. (strain 638).